The primary structure comprises 432 residues: Nuclear pore complex-interacting protein family member B8 (432 aa).

Disordered regions lie at residues Arg-260 to Ser-280 and Ser-353 to Arg-420. A compositionally biased stretch (polar residues) spans Gln-270–Ser-280. Over residues Glu-374–Glu-402 the composition is skewed to basic and acidic residues. Over residues Lys-408–Arg-420 the composition is skewed to basic residues.

Belongs to the NPIP family.

In Homo sapiens (Human), this protein is Nuclear pore complex-interacting protein family member B8 (NPIPB8).